The sequence spans 426 residues: Glutamate-1-semialdehyde 2,1-aminomutase (426 aa).

At Lys265 the chain carries N6-(pyridoxal phosphate)lysine.

The protein belongs to the class-III pyridoxal-phosphate-dependent aminotransferase family. HemL subfamily. Homodimer. The cofactor is pyridoxal 5'-phosphate.

Its subcellular location is the cytoplasm. The enzyme catalyses (S)-4-amino-5-oxopentanoate = 5-aminolevulinate. It participates in porphyrin-containing compound metabolism; protoporphyrin-IX biosynthesis; 5-aminolevulinate from L-glutamyl-tRNA(Glu): step 2/2. This chain is Glutamate-1-semialdehyde 2,1-aminomutase, found in Erwinia tasmaniensis (strain DSM 17950 / CFBP 7177 / CIP 109463 / NCPPB 4357 / Et1/99).